The following is a 296-amino-acid chain: Giardin subunit alpha-4 (296 aa).

Annexin repeat units lie at residues 3–72, 74–146, 153–223, and 226–294; these read ATVS…VHAW, SRFE…GWVK, KSIK…AHHW, and DPGQ…VFWR.

This sequence belongs to the annexin family. Giardin subunit alpha subfamily.

The protein localises to the cytoplasm. The protein resides in the cytoskeleton. Giardins are involved in parasite attachment to the intestinal mucosa and in the cytoskeletal disassembly and reassembly that marks the transition from infectious trophozoite to transmissible cyst. They may interact with other cytoskeletal proteins such as microtubules in the microribbons or crossbridges, to maintain the integrity of the ventral disk. In Giardia intestinalis (Giardia lamblia), this protein is Giardin subunit alpha-4.